Reading from the N-terminus, the 381-residue chain is RING-H2 finger protein ATL1 (381 aa).

The tract at residues 1–31 is disordered; that stretch reads MDLTDRRNPFNNLVFPPPPPPPSTTFTSPIF. Residues 46–66 form a helical membrane-spanning segment; it reads IAVIGILATAFLLVSYYIFVI. An RING-type; atypical zinc finger spans residues 134–176; that stretch reads CSVCLNEFQEDEKLRIIPNCCHVFHIDCIDIWLQGNANCPLCR. Disordered stretches follow at residues 249 to 269 and 334 to 354; these read TSNEVSTGNSPKSVSPLPIKF and RQIPVAGDGEDSSSSGGGNSR. Over residues 250–261 the composition is skewed to polar residues; the sequence is SNEVSTGNSPKS.

It belongs to the RING-type zinc finger family. ATL subfamily.

The protein resides in the membrane. It catalyses the reaction S-ubiquitinyl-[E2 ubiquitin-conjugating enzyme]-L-cysteine + [acceptor protein]-L-lysine = [E2 ubiquitin-conjugating enzyme]-L-cysteine + N(6)-ubiquitinyl-[acceptor protein]-L-lysine.. Its pathway is protein modification; protein ubiquitination. This Arabidopsis thaliana (Mouse-ear cress) protein is RING-H2 finger protein ATL1 (ATL1).